Here is a 223-residue protein sequence, read N- to C-terminus: Neurotrophic factor BDNF precursor form (223 aa).

Positions 1–5 are cleaved as a signal peptide; it reads SCMKA. The propeptide occupies 6–114; sequence APMKEVSLRG…AANMSMRVRR (109 aa). The N-linked (GlcNAc...) asparagine glycan is linked to asparagine 107. Disulfide bonds link cysteine 127–cysteine 194 and cysteine 172–cysteine 223.

The protein belongs to the NGF-beta family.

It is found in the secreted. Promotes the survival of neuronal populations that are all located either in the central nervous system or directly connected to it. This Ramphotyphlops sp. (strain YPM 13663) (Blind snake) protein is Neurotrophic factor BDNF precursor form (BDNF).